The following is a 301-amino-acid chain: Fructokinase (301 aa).

Zn(2+) is bound by residues histidine 165, cysteine 181, histidine 184, and cysteine 187.

It belongs to the ROK (NagC/XylR) family. Mg(2+) is required as a cofactor.

The enzyme catalyses D-fructose + ATP = D-fructose 6-phosphate + ADP + H(+). Its activity is regulated as follows. Inhibition by zinc ions. The chain is Fructokinase (frk) from Zymomonas mobilis subsp. mobilis (strain ATCC 31821 / ZM4 / CP4).